The primary structure comprises 198 residues: MTLTALLALLLSYLIGAIPAAAWLARARGVDIRKVGSGNSGATNVLRSLGKGPALLVASFDILKGVLAVLLARALGLSAEWAALCGVLAVIGHNFSPFLAFRGGKGVATSFGVIAILDPVLGLTTFVLAIACMWLTRFVSAGSIMGAFIAGALVLVLPRPTWDRAAVLFLAALLVWQHRENIRKLQAGTERRLGEKVS.

The next 5 helical transmembrane spans lie at 5–25 (ALLA…AWLA), 52–72 (GPAL…VLLA), 81–101 (WAAL…FLAF), 111–131 (FGVI…LAIA), and 138–158 (FVSA…LVLP).

This sequence belongs to the PlsY family. As to quaternary structure, probably interacts with PlsX.

The protein resides in the cell membrane. The enzyme catalyses an acyl phosphate + sn-glycerol 3-phosphate = a 1-acyl-sn-glycero-3-phosphate + phosphate. The protein operates within lipid metabolism; phospholipid metabolism. Its function is as follows. Catalyzes the transfer of an acyl group from acyl-phosphate (acyl-PO(4)) to glycerol-3-phosphate (G3P) to form lysophosphatidic acid (LPA). This enzyme utilizes acyl-phosphate as fatty acyl donor, but not acyl-CoA or acyl-ACP. This Deinococcus radiodurans (strain ATCC 13939 / DSM 20539 / JCM 16871 / CCUG 27074 / LMG 4051 / NBRC 15346 / NCIMB 9279 / VKM B-1422 / R1) protein is Glycerol-3-phosphate acyltransferase 1.